The primary structure comprises 144 residues: UPF0102 protein BTH_I3148 (144 aa).

The tract at residues 1-20 (MCHARAARQATGEAEAAPRD) is disordered.

The protein belongs to the UPF0102 family.

This chain is UPF0102 protein BTH_I3148, found in Burkholderia thailandensis (strain ATCC 700388 / DSM 13276 / CCUG 48851 / CIP 106301 / E264).